Here is an 865-residue protein sequence, read N- to C-terminus: Bifunctional uridylyltransferase/uridylyl-removing enzyme (865 aa).

A uridylyltransferase region spans residues 1–318 (MPHVDLNPLK…FPRPDSDARL (318 aa)). Positions 319 to 675 (IDDDFRNLRE…VRPTEHGEGL (357 aa)) are uridylyl-removing. An HD domain is found at 437–559 (VDQHTLAVVR…VGDERRLAAL (123 aa)). ACT domains lie at 676–762 (QVMV…RLPH) and 789–865 (RLSV…QQAA). Residues 747-767 (DPHAARHAHAPRRLPHSHARR) are disordered. A compositionally biased stretch (basic residues) spans 751–767 (ARHAHAPRRLPHSHARR).

Belongs to the GlnD family. Mg(2+) serves as cofactor.

The catalysed reaction is [protein-PII]-L-tyrosine + UTP = [protein-PII]-uridylyl-L-tyrosine + diphosphate. It catalyses the reaction [protein-PII]-uridylyl-L-tyrosine + H2O = [protein-PII]-L-tyrosine + UMP + H(+). Uridylyltransferase (UTase) activity is inhibited by glutamine, while glutamine activates uridylyl-removing (UR) activity. In terms of biological role, modifies, by uridylylation and deuridylylation, the PII regulatory proteins (GlnB and homologs), in response to the nitrogen status of the cell that GlnD senses through the glutamine level. Under low glutamine levels, catalyzes the conversion of the PII proteins and UTP to PII-UMP and PPi, while under higher glutamine levels, GlnD hydrolyzes PII-UMP to PII and UMP (deuridylylation). Thus, controls uridylylation state and activity of the PII proteins, and plays an important role in the regulation of nitrogen assimilation and metabolism. This Bordetella bronchiseptica (strain ATCC BAA-588 / NCTC 13252 / RB50) (Alcaligenes bronchisepticus) protein is Bifunctional uridylyltransferase/uridylyl-removing enzyme.